Here is a 465-residue protein sequence, read N- to C-terminus: tRNA modification GTPase MnmE (465 aa).

(6S)-5-formyl-5,6,7,8-tetrahydrofolate contacts are provided by Arg21, Glu85, and Lys124. Residues 220–387 (GVPVAIIGET…LQQRLVAAAH (168 aa)) form the TrmE-type G domain. Asn230 contacts K(+). GTP is bound by residues 230-235 (NAGKST), 249-255 (SDIHGTT), and 274-277 (DTAG). Residue Ser234 participates in Mg(2+) binding. K(+) contacts are provided by Ser249, Ile251, and Thr254. Thr255 is a binding site for Mg(2+). Lys465 contributes to the (6S)-5-formyl-5,6,7,8-tetrahydrofolate binding site.

It belongs to the TRAFAC class TrmE-Era-EngA-EngB-Septin-like GTPase superfamily. TrmE GTPase family. As to quaternary structure, homodimer. Heterotetramer of two MnmE and two MnmG subunits. It depends on K(+) as a cofactor.

The protein localises to the cytoplasm. Functionally, exhibits a very high intrinsic GTPase hydrolysis rate. Involved in the addition of a carboxymethylaminomethyl (cmnm) group at the wobble position (U34) of certain tRNAs, forming tRNA-cmnm(5)s(2)U34. This is tRNA modification GTPase MnmE from Bacteroides fragilis (strain YCH46).